We begin with the raw amino-acid sequence, 82 residues long: UPF0298 protein SPCG_0698 (82 aa).

The protein belongs to the UPF0298 family.

The protein localises to the cytoplasm. This is UPF0298 protein SPCG_0698 from Streptococcus pneumoniae (strain CGSP14).